The following is a 267-amino-acid chain: L-aspartate dehydrogenase (267 aa).

2 residues coordinate NAD(+): A124 and N190. Residue H220 is part of the active site.

Belongs to the L-aspartate dehydrogenase family.

It carries out the reaction L-aspartate + NADP(+) + H2O = oxaloacetate + NH4(+) + NADPH + H(+). It catalyses the reaction L-aspartate + NAD(+) + H2O = oxaloacetate + NH4(+) + NADH + H(+). It participates in cofactor biosynthesis; NAD(+) biosynthesis; iminoaspartate from L-aspartate (dehydrogenase route): step 1/1. In terms of biological role, specifically catalyzes the NAD or NADP-dependent dehydrogenation of L-aspartate to iminoaspartate. This Ralstonia pickettii (strain 12J) protein is L-aspartate dehydrogenase.